The following is a 133-amino-acid chain: Small ribosomal subunit protein uS19 (133 aa).

The protein belongs to the universal ribosomal protein uS19 family.

Functionally, protein S19 forms a complex with S13 that binds strongly to the 16S ribosomal RNA. The chain is Small ribosomal subunit protein uS19 (rps19) from Archaeoglobus fulgidus (strain ATCC 49558 / DSM 4304 / JCM 9628 / NBRC 100126 / VC-16).